We begin with the raw amino-acid sequence, 91 residues long: Small ribosomal subunit protein uS19 (91 aa).

This sequence belongs to the universal ribosomal protein uS19 family.

Functionally, protein S19 forms a complex with S13 that binds strongly to the 16S ribosomal RNA. This chain is Small ribosomal subunit protein uS19, found in Leptothrix cholodnii (strain ATCC 51168 / LMG 8142 / SP-6) (Leptothrix discophora (strain SP-6)).